The primary structure comprises 246 residues: Uridylate kinase (246 aa).

Position 20-23 (20-23) interacts with ATP; sequence KISG. The involved in allosteric activation by GTP stretch occupies residues 28 to 33; that stretch reads GDQGYG. Glycine 62 contacts UMP. Residues glycine 63 and arginine 67 each contribute to the ATP site. Residues aspartate 82 and 143–150 each bind UMP; that span reads TGNPYFTT. Threonine 170, tyrosine 176, and aspartate 179 together coordinate ATP.

This sequence belongs to the UMP kinase family. Homohexamer.

It localises to the cytoplasm. It carries out the reaction UMP + ATP = UDP + ADP. It functions in the pathway pyrimidine metabolism; CTP biosynthesis via de novo pathway; UDP from UMP (UMPK route): step 1/1. Its activity is regulated as follows. Allosterically activated by GTP. Inhibited by UTP. Catalyzes the reversible phosphorylation of UMP to UDP. This chain is Uridylate kinase, found in Cereibacter sphaeroides (strain ATCC 17025 / ATH 2.4.3) (Rhodobacter sphaeroides).